The chain runs to 409 residues: D-galactonate dehydratase family member Achl_0790 (409 aa).

Mg(2+) is bound at residue Asp217. A D-arabinonate-binding site is contributed by His219. Positions 243 and 269 each coordinate Mg(2+). D-arabinonate-binding residues include Glu269, Arg290, His319, and Glu346.

The protein belongs to the mandelate racemase/muconate lactonizing enzyme family. GalD subfamily.

Has no detectable activity with D-mannonate and with a panel of 70 other acid sugars (in vitro), in spite of the conservation of the residues that are expected to be important for catalytic activity and cofactor binding. May have evolved a divergent function. The sequence is that of D-galactonate dehydratase family member Achl_0790 from Pseudarthrobacter chlorophenolicus (strain ATCC 700700 / DSM 12829 / CIP 107037 / JCM 12360 / KCTC 9906 / NCIMB 13794 / A6) (Arthrobacter chlorophenolicus).